The following is a 487-amino-acid chain: 1-aminocyclopropane-1-carboxylate synthase 1 (487 aa).

An N6-(pyridoxal phosphate)lysine modification is found at Lys-286.

It belongs to the class-I pyridoxal-phosphate-dependent aminotransferase family. In terms of assembly, homodimer. Pyridoxal 5'-phosphate serves as cofactor.

It catalyses the reaction S-adenosyl-L-methionine = 1-aminocyclopropane-1-carboxylate + S-methyl-5'-thioadenosine + H(+). Its pathway is alkene biosynthesis; ethylene biosynthesis via S-adenosyl-L-methionine; ethylene from S-adenosyl-L-methionine: step 1/2. Catalyzes the formation of 1-aminocyclopropane-1-carboxylate, a direct precursor of ethylene in higher plants. In Oryza sativa subsp. indica (Rice), this protein is 1-aminocyclopropane-1-carboxylate synthase 1 (ACC1).